The primary structure comprises 467 residues: DNA polymerase IV (467 aa).

Residues 5–187 form the UmuC domain; the sequence is VLHIDMDAFF…LPVGALWGVG (183 aa). Residues Asp-9 and Asp-104 each coordinate Mg(2+). Glu-105 is a catalytic residue. Disordered stretches follow at residues 364–386 and 428–449; these read PDTDYEVGVQSSSSSESTQVEAP and TKGRTKSFSMDDPDLTPADPLD.

This sequence belongs to the DNA polymerase type-Y family. In terms of assembly, monomer. The cofactor is Mg(2+).

It is found in the cytoplasm. It carries out the reaction DNA(n) + a 2'-deoxyribonucleoside 5'-triphosphate = DNA(n+1) + diphosphate. In terms of biological role, poorly processive, error-prone DNA polymerase involved in untargeted mutagenesis. Copies undamaged DNA at stalled replication forks, which arise in vivo from mismatched or misaligned primer ends. These misaligned primers can be extended by PolIV. Exhibits no 3'-5' exonuclease (proofreading) activity. May be involved in translesional synthesis, in conjunction with the beta clamp from PolIII. In Corynebacterium glutamicum (strain R), this protein is DNA polymerase IV.